A 147-amino-acid chain; its full sequence is Hemoglobin subunit beta (147 aa).

Position 2 is an N-acetylvaline (valine 2). In terms of domain architecture, Globin spans 3–147; the sequence is HLSGDEKNAV…VANALAHRYH (145 aa). Residue serine 45 is modified to Phosphoserine. N6-acetyllysine is present on lysine 60. Histidine 64 is a binding site for heme b. N6-acetyllysine is present on lysine 83. Histidine 93 is a binding site for heme b. Position 94 is an S-nitrosocysteine (cysteine 94).

It belongs to the globin family. In terms of assembly, heterotetramer of two alpha chains and two beta chains. As to expression, red blood cells.

Involved in oxygen transport from the lung to the various peripheral tissues. This is Hemoglobin subunit beta (HBB) from Camelus dromedarius (Dromedary).